A 787-amino-acid polypeptide reads, in one-letter code: Integrin beta-6 (787 aa).

The N-terminal stretch at 1-21 (MGIELLCLFFLFLGRNDHVQG) is a signal peptide. A PSI domain is found at 22 to 71 (GCAMGGAETCEDCLLIGPQCAWCSQENFTHLSGVGERCDTPANLLAKGCQ). Residues 22-708 (GCAMGGAETC…KDCPKPPNIP (687 aa)) are Extracellular-facing. Cystine bridges form between Cys-23–Cys-41, Cys-31–Cys-454, Cys-34–Cys-59, Cys-44–Cys-70, Cys-197–Cys-204, Cys-252–Cys-293, Cys-394–Cys-406, Cys-426–Cys-452, Cys-456–Cys-476, Cys-467–Cys-479, Cys-481–Cys-490, Cys-492–Cys-519, Cys-502–Cys-517, Cys-511–Cys-522, Cys-524–Cys-537, Cys-539–Cys-560, Cys-544–Cys-558, Cys-552–Cys-563, and Cys-565–Cys-574. 2 N-linked (GlcNAc...) asparagine glycosylation sites follow: Asn-48 and Asn-97. Residues 131-371 (YPVDLYYLMD…QLIISAYEEL (241 aa)) form the VWFA domain. Positions 140, 142, and 144 each coordinate Mg(2+). 4 residues coordinate Ca(2+): Ser-144, Asp-147, Asp-148, and Glu-179. Residues Asn-235, Asp-237, Pro-239, and Glu-240 each contribute to the Ca(2+) site. Glu-240 provides a ligand contact to Mg(2+). Asn-260 carries N-linked (GlcNAc...) asparagine glycosylation. Ca(2+) contacts are provided by Asp-271 and Lys-355. Asn-387 carries an N-linked (GlcNAc...) asparagine glycan. Asn-418 is a glycosylation site (N-linked (GlcNAc...) asparagine). I-EGF domains lie at 456–491 (CQKEVEVNSSKCSNGNGSFQCGVCACNPGHVGHHCE), 492–538 (CGED…PYCQ), 539–575 (CDNFSCVRHKGLLCGDNGDCDCGECVCRSGWTGEYCN), and 576–615 (CTTSTDPCVSEDGILCSGRGDCVCGKCICTNPGASGPACE). Asn-463 and Asn-471 each carry an N-linked (GlcNAc...) asparagine glycan. Residue Asn-541 is glycosylated (N-linked (GlcNAc...) asparagine). N-linked (GlcNAc...) asparagine glycosylation occurs at Asn-575. 9 disulfides stabilise this stretch: Cys-576/Cys-599, Cys-583/Cys-597, Cys-591/Cys-602, Cys-604/Cys-614, Cys-617/Cys-620, Cys-624/Cys-670, Cys-630/Cys-649, Cys-633/Cys-645, and Cys-678/Cys-701. Residues 709-729 (MIMLGVSLAILLIGVALLCIW) traverse the membrane as a helical segment. An interaction with HAX1 region spans residues 730 to 757 (KLLVSFHDRKEVAKFEAERSKAKWQTGT). At 730-787 (KLLVSFHDRKEVAKFEAERSKAKWQTGTNPLYRGSTSTFKNVTYKHKEKQKVDLSTDG) the chain is on the cytoplasmic side.

It belongs to the integrin beta chain family. Heterodimer of an alpha and a beta subunit. Interacts with FLNB. Interacts with HAX1. ITGAV:ITGB6 interacts with FBN1. ITGAV:ITGB6 interacts with TGFB1.

Its subcellular location is the cell membrane. The protein localises to the cell junction. The protein resides in the focal adhesion. In terms of biological role, integrin alpha-V:beta-6 (ITGAV:ITGB6) is a receptor for fibronectin and cytotactin. It recognizes the sequence R-G-D in its ligands. ITGAV:ITGB6 acts as a receptor for fibrillin-1 (FBN1) and mediates R-G-D-dependent cell adhesion to FBN1. Integrin alpha-V:beta-6 (ITGAV:ITGB6) mediates R-G-D-dependent release of transforming growth factor beta-1 (TGF-beta-1) from regulatory Latency-associated peptide (LAP), thereby playing a key role in TGF-beta-1 activation. The chain is Integrin beta-6 (ITGB6) from Ovis aries (Sheep).